The sequence spans 334 residues: Thiamine-binding periplasmic protein (334 aa).

The N-terminal stretch at 1 to 23 (MRLLSLLTFSLFAVIGLAPAAQA) is a signal peptide. Thiamine contacts are provided by residues 64–65 (DG), 166–167 (AT), W202, and 220–223 (YTTS).

This sequence belongs to the bacterial solute-binding protein 1 family. The complex is composed of two ATP-binding proteins (ThiQ), two transmembrane proteins (ThiP) and a solute-binding protein (ThiB).

It localises to the periplasm. Part of the ABC transporter complex ThiBPQ involved in thiamine import. This is Thiamine-binding periplasmic protein (thiB) from Brucella abortus biovar 1 (strain 9-941).